Consider the following 125-residue polypeptide: Fluoride-specific ion channel FluC (125 aa).

Transmembrane regions (helical) follow at residues Ala6 to Val26, Trp36 to Ala56, Phe68 to Ala88, and Trp97 to Leu117. Na(+) is bound by residues Gly76 and Thr79.

Belongs to the fluoride channel Fluc/FEX (TC 1.A.43) family.

Its subcellular location is the cell inner membrane. It catalyses the reaction fluoride(in) = fluoride(out). Na(+) is not transported, but it plays an essential structural role and its presence is essential for fluoride channel function. Its function is as follows. Fluoride-specific ion channel. Important for reducing fluoride concentration in the cell, thus reducing its toxicity. This is Fluoride-specific ion channel FluC from Nitrosococcus oceani (strain ATCC 19707 / BCRC 17464 / JCM 30415 / NCIMB 11848 / C-107).